Reading from the N-terminus, the 399-residue chain is Tyrosine--tRNA ligase 2 (399 aa).

The 'HIGH' region signature appears at 43-52; it reads PTAPDLHLGH. The 'KMSKS' region signature appears at 227–231; sequence KMSKS. Lys230 provides a ligand contact to ATP. The 61-residue stretch at 338-398 folds into the S4 RNA-binding domain; the sequence is ITLLDLCSVA…IGKRYKFRIG (61 aa).

The protein belongs to the class-I aminoacyl-tRNA synthetase family. TyrS type 2 subfamily. Homodimer.

It localises to the cytoplasm. It carries out the reaction tRNA(Tyr) + L-tyrosine + ATP = L-tyrosyl-tRNA(Tyr) + AMP + diphosphate + H(+). Catalyzes the attachment of tyrosine to tRNA(Tyr) in a two-step reaction: tyrosine is first activated by ATP to form Tyr-AMP and then transferred to the acceptor end of tRNA(Tyr). This chain is Tyrosine--tRNA ligase 2, found in Photorhabdus laumondii subsp. laumondii (strain DSM 15139 / CIP 105565 / TT01) (Photorhabdus luminescens subsp. laumondii).